Here is a 1502-residue protein sequence, read N- to C-terminus: Nucleoporin NUP170 (1502 aa).

The tract at residues 1-31 is disordered; that stretch reads MFQSFFHNNGPAAAGETFSDSRSYPLTNHQE. Polar residues predominate over residues 18-30; that stretch reads FSDSRSYPLTNHQ. Residues 233–261 form a leucine-zipper region; that stretch reads LISTTMELFMFAISLDKATNELSVFNTHL. A Phosphoserine modification is found at serine 1247.

The protein belongs to the non-repetitive/WGA-negative nucleoporin family. As to quaternary structure, component of the nuclear pore complex (NPC). NPC constitutes the exclusive means of nucleocytoplasmic transport. NPCs allow the passive diffusion of ions and small molecules and the active, nuclear transport receptor-mediated bidirectional transport of macromolecules such as proteins, RNAs, ribonucleoparticles (RNPs), and ribosomal subunits across the nuclear envelope. Due to its 8-fold rotational symmetry, all subunits are present with 8 copies or multiples thereof. During mitosis NUP53 changes its binding partner within the NPC from NUP170 to NIC96, exposing a high affinity binding site for the karyopherin PSE1, and retaining it in the NPC.

The protein resides in the nucleus. Its subcellular location is the nuclear pore complex. The protein localises to the nucleus membrane. Functions as a component of the nuclear pore complex (NPC). NPC components, collectively referred to as nucleoporins (NUPs), can play the role of both NPC structural components and of docking or interaction partners for transiently associated nuclear transport factors. NUP170 probably plays an important role in NPC assembly and organization. In addition it is required for chromosome transmission fidelity. The chain is Nucleoporin NUP170 (NUP170) from Saccharomyces cerevisiae (strain ATCC 204508 / S288c) (Baker's yeast).